The following is a 628-amino-acid chain: Nuclear RNA export factor 1 (628 aa).

The tract at residues 47 to 83 is disordered; the sequence is DTQSRYEDDDEPAVPVRASLTSASSRGRGGSSRGFGQ. Low complexity predominate over residues 63–72; the sequence is RASLTSASSR. An RRM domain is found at 100–179; sequence YKCRATGAAK…EFYTSKVPAP (80 aa). 2 LRR repeats span residues 245-270 and 271-294; these read NIVALSLSNNRIRHLDYASALVSIAK and FVMELDLSHNHISTEKELEKFAGL. An NTF2 domain is found at 365–526; it reads LVEQFVTSYF…VAVISDQLFI (162 aa). The region spanning 576-628 is the TAP-C domain; the sequence is PIREEMIKAMCQFSGMIPPFSEKCLADCAWNFDFACQKFNEIKSSVPAEAFAH.

This sequence belongs to the NXF family. As to quaternary structure, interacts with nucleoporins, Nup98, Nup153 and Nup214.

It is found in the nucleus. In terms of biological role, involved in RNA export from the nucleus to the cytoplasm. The chain is Nuclear RNA export factor 1 (nxf-1) from Caenorhabditis elegans.